The sequence spans 502 residues: Lysine--tRNA ligase (502 aa).

Mg(2+) contacts are provided by glutamate 398 and glutamate 405.

This sequence belongs to the class-II aminoacyl-tRNA synthetase family. Homodimer. Mg(2+) is required as a cofactor.

It localises to the cytoplasm. It catalyses the reaction tRNA(Lys) + L-lysine + ATP = L-lysyl-tRNA(Lys) + AMP + diphosphate. This chain is Lysine--tRNA ligase, found in Thermosipho africanus (strain TCF52B).